The primary structure comprises 748 residues: LPS-assembly protein LptD (748 aa).

A signal peptide spans 1–19 (MSKTWGILMLSVLSAPSLA).

It belongs to the LptD family. Component of the lipopolysaccharide transport and assembly complex. Interacts with LptE and LptA.

It is found in the cell outer membrane. Functionally, together with LptE, is involved in the assembly of lipopolysaccharide (LPS) at the surface of the outer membrane. The polypeptide is LPS-assembly protein LptD (Pseudoalteromonas translucida (strain TAC 125)).